The following is a 116-amino-acid chain: Dynein light chain Tctex-type 3 (116 aa).

The residue at position 4 (Tyr4) is a 3'-nitrotyrosine.

It belongs to the dynein light chain Tctex-type family. Homodimer. The cytoplasmic dynein 1 complex consists of two catalytic heavy chains (HCs) and a number of non-catalytic subunits presented by intermediate chains (ICs), light intermediate chains (LICs) and light chains (LCs); the composition seems to vary in respect to the IC, LIC and LC composition. The heavy chain homodimer serves as a scaffold for the probable homodimeric assembly of the respective non-catalytic subunits. The ICs and LICs bind directly to the HC dimer and the LCs assemble on the IC dimer. DYNLT1 and DYNLT3 compete for association with dynein IC (DYNC1I1 or DYNC1I2). Self-associates. Interacts with DYNC1I1 and DYNC1I2. Interacts with BUB3. Interacts with SATB1 in nucleus to form complex with matrix attachment regions (MARs) of DNA.

It localises to the nucleus. Its subcellular location is the cytoplasm. The protein resides in the cytoskeleton. It is found in the chromosome. The protein localises to the centromere. It localises to the kinetochore. Functionally, acts as one of several non-catalytic accessory components of the cytoplasmic dynein 1 complex that are thought to be involved in linking dynein to cargos and to adapter proteins that regulate dynein function. Cytoplasmic dynein 1 acts as a motor for the intracellular retrograde motility of vesicles and organelles along microtubules. Probably binds BUB3 as part of transport cargo. Required for the efficient progression through mitosis. The protein is Dynein light chain Tctex-type 3 (Dynlt3) of Mus musculus (Mouse).